A 483-amino-acid polypeptide reads, in one-letter code: Protein nucleotidyltransferase YdiU (483 aa).

G87, G89, R90, K110, D122, G123, R173, and R180 together coordinate ATP. D249 acts as the Proton acceptor in catalysis. N250 and D259 together coordinate Mg(2+). D259 contributes to the ATP binding site.

Belongs to the SELO family. The cofactor is Mg(2+). It depends on Mn(2+) as a cofactor.

The catalysed reaction is L-seryl-[protein] + ATP = 3-O-(5'-adenylyl)-L-seryl-[protein] + diphosphate. The enzyme catalyses L-threonyl-[protein] + ATP = 3-O-(5'-adenylyl)-L-threonyl-[protein] + diphosphate. It catalyses the reaction L-tyrosyl-[protein] + ATP = O-(5'-adenylyl)-L-tyrosyl-[protein] + diphosphate. It carries out the reaction L-histidyl-[protein] + UTP = N(tele)-(5'-uridylyl)-L-histidyl-[protein] + diphosphate. The catalysed reaction is L-seryl-[protein] + UTP = O-(5'-uridylyl)-L-seryl-[protein] + diphosphate. The enzyme catalyses L-tyrosyl-[protein] + UTP = O-(5'-uridylyl)-L-tyrosyl-[protein] + diphosphate. In terms of biological role, nucleotidyltransferase involved in the post-translational modification of proteins. It can catalyze the addition of adenosine monophosphate (AMP) or uridine monophosphate (UMP) to a protein, resulting in modifications known as AMPylation and UMPylation. The protein is Protein nucleotidyltransferase YdiU of Yersinia pseudotuberculosis serotype O:1b (strain IP 31758).